Consider the following 138-residue polypeptide: Endoribonuclease YbeY (138 aa).

Zn(2+) is bound by residues H98, H102, and H108.

Belongs to the endoribonuclease YbeY family. Zn(2+) is required as a cofactor.

The protein localises to the cytoplasm. Functionally, single strand-specific metallo-endoribonuclease involved in late-stage 70S ribosome quality control and in maturation of the 3' terminus of the 16S rRNA. This chain is Endoribonuclease YbeY, found in Thermosipho melanesiensis (strain DSM 12029 / CIP 104789 / BI429).